The sequence spans 1237 residues: Cilia- and flagella-associated protein 61 (1237 aa).

The segment at 278-301 (QDLSVRRSQDAELRSSSQGSQKIV) is disordered. A compositionally biased stretch (basic and acidic residues) spans 281 to 290 (SVRRSQDAEL).

Component of axonemal radial spokes, the protein complexes that link the outer microtubule doublets with the central pair of microtubules. Interacts with CFAP91/MAATS1, ODAD2/ARMC4, RSPH3A, ROPN1, ROPN1L and RSPH9. Interacts with DYNLT1, DYNC1I2 and TUBB3. Interacts with WDR35, IFT22 and IFT81.

Its subcellular location is the cytoplasm. It is found in the cytoskeleton. The protein localises to the flagellum axoneme. Involved in sperm flagellum assembly. Plays an essential role in the formation of the radial spokes in flagellum axoneme. This chain is Cilia- and flagella-associated protein 61, found in Homo sapiens (Human).